Here is a 437-residue protein sequence, read N- to C-terminus: ATP-dependent protease ATPase subunit HslU (437 aa).

Residues valine 18, 60 to 65 (GCGKTE), aspartate 250, glutamate 315, and arginine 387 each bind ATP.

The protein belongs to the ClpX chaperone family. HslU subfamily. In terms of assembly, a double ring-shaped homohexamer of HslV is capped on each side by a ring-shaped HslU homohexamer. The assembly of the HslU/HslV complex is dependent on binding of ATP.

The protein resides in the cytoplasm. ATPase subunit of a proteasome-like degradation complex; this subunit has chaperone activity. The binding of ATP and its subsequent hydrolysis by HslU are essential for unfolding of protein substrates subsequently hydrolyzed by HslV. HslU recognizes the N-terminal part of its protein substrates and unfolds these before they are guided to HslV for hydrolysis. This is ATP-dependent protease ATPase subunit HslU from Methylorubrum populi (strain ATCC BAA-705 / NCIMB 13946 / BJ001) (Methylobacterium populi).